A 244-amino-acid chain; its full sequence is Eukaryotic translation initiation factor 4E type 1B (244 aa).

Over residues 1 to 26 (MNKVEGGGHKEEVVVKEKEVVKEKPS) the composition is skewed to basic and acidic residues. The disordered stretch occupies residues 1–57 (MNKVEGGGHKEEVVVKEKEVVKEKPSEATAEGVQAGEAKDLPGSLKTQRRKAHREHP). Positions 65-68 (HPLQ) are EIF4EBP1/2/3 binding. 84 to 85 (WQ) is a binding site for mRNA. The EIF4EBP1/2/3 binding stretch occupies residues 101–105 (WAVYS). Residue 130-131 (WE) coordinates mRNA. An EIF4EBP1/2/3 binding region spans residues 160-167 (ETLLCLVG). Residues 185–190 (RTKRDK) and 233–235 (AKS) contribute to the mRNA site.

Belongs to the eukaryotic initiation factor 4E family. As to quaternary structure, EIF4F is a multi-subunit complex, the composition of which varies with external and internal environmental conditions. It is composed of at least EIF4A, EIF4E and EIF4G.

Its function is as follows. Recognizes and binds the 7-methylguanosine-containing mRNA cap during an early step in the initiation of protein synthesis and facilitates ribosome binding by inducing the unwinding of the mRNAs secondary structures. This Mus musculus (Mouse) protein is Eukaryotic translation initiation factor 4E type 1B (Eif4e1b).